The primary structure comprises 43 residues: Protein PsbN (43 aa).

Residues 7–29 (VTIFLSGLLVSFTGYALYTAFGQ) form a helical membrane-spanning segment.

This sequence belongs to the PsbN family.

The protein resides in the plastid. Its subcellular location is the chloroplast thylakoid membrane. Functionally, may play a role in photosystem I and II biogenesis. The polypeptide is Protein PsbN (Ipomoea purpurea (Common morning glory)).